Consider the following 393-residue polypeptide: (S)-mandelate dehydrogenase (393 aa).

Residues 1 to 377 form the FMN hydroxy acid dehydrogenase domain; sequence MSQNLFNVED…SPDYLQNEGV (377 aa). Tyrosine 26 is a binding site for (S)-mandelate. FMN contacts are provided by residues 79–81, serine 108, and glutamine 129; that span reads PTG. Residue tyrosine 131 participates in (S)-mandelate binding. Threonine 156 is a binding site for FMN. Arginine 165 contributes to the (S)-mandelate binding site. Lysine 250 provides a ligand contact to FMN. The (S)-mandelate site is built by histidine 274 and arginine 277. The active-site Proton acceptor is histidine 274. Residues 303–307 and 326–327 contribute to the FMN site; these read DSGFR and GR.

Belongs to the FMN-dependent alpha-hydroxy acid dehydrogenase family. Homotetramer. FMN serves as cofactor.

The protein localises to the cell inner membrane. The enzyme catalyses (S)-mandelate + A = phenylglyoxylate + AH2. It functions in the pathway aromatic compound metabolism; (R)-mandelate degradation; benzoate from (R)-mandelate: step 2/4. Its function is as follows. Catalyzes the dehydrogenation of (S)-mandelate to phenylglyoxylate (benzoylformate). Is likely involved in the utilization of mandelate as a sole source of carbon and energy for growth. Active in vitro with the artificial electron acceptors 2,6-dichlorophenolindophenol (DCPIP) or ferricyanide, but in vivo most likely transfer the electron pair from the reduced flavin to a component of the electron transport chain in the membrane, possibly a quinone. Shows very low activity with oxygen as the electron acceptor, and also with 3-indolelactate and medium chain 2-hydroxyacids as substrates. The chain is (S)-mandelate dehydrogenase from Pseudomonas putida (Arthrobacter siderocapsulatus).